The primary structure comprises 761 residues: Xaa-Pro dipeptidyl-peptidase (761 aa).

Residues Ser349, Asp469, and His499 each act as charge relay system in the active site.

The protein belongs to the peptidase S15 family. In terms of assembly, homodimer.

Its subcellular location is the cytoplasm. It carries out the reaction Hydrolyzes Xaa-Pro-|- bonds to release unblocked, N-terminal dipeptides from substrates including Ala-Pro-|-p-nitroanilide and (sequentially) Tyr-Pro-|-Phe-Pro-|-Gly-Pro-|-Ile.. Removes N-terminal dipeptides sequentially from polypeptides having unsubstituted N-termini provided that the penultimate residue is proline. This Streptococcus equi subsp. zooepidemicus (strain H70) protein is Xaa-Pro dipeptidyl-peptidase.